Consider the following 275-residue polypeptide: N-(5'-phosphoribosyl)anthranilate isomerase 1, chloroplastic (275 aa).

A chloroplast-targeting transit peptide spans 1 to 32; sequence MSTGISTDLHVHFGALNFSKTYKSGLSNRTVS.

It belongs to the TrpF family. Expressed in roots and shoots.

It is found in the plastid. The protein resides in the chloroplast. It carries out the reaction N-(5-phospho-beta-D-ribosyl)anthranilate = 1-(2-carboxyphenylamino)-1-deoxy-D-ribulose 5-phosphate. Its pathway is amino-acid biosynthesis; L-tryptophan biosynthesis; L-tryptophan from chorismate: step 3/5. Functionally, catalyzes the conversion of 5-phosphoribosylanthranilate to l-(O-carboxyphenylamino)-l-deoxyribulose-5-phosphate, which is the third step of the tryptophan biosynthetic pathway. This Arabidopsis thaliana (Mouse-ear cress) protein is N-(5'-phosphoribosyl)anthranilate isomerase 1, chloroplastic (PAI1).